Consider the following 550-residue polypeptide: Glucose-6-phosphate isomerase (550 aa).

Glu356 serves as the catalytic Proton donor. Residues His387 and Lys515 contribute to the active site.

It belongs to the GPI family.

The protein resides in the cytoplasm. The catalysed reaction is alpha-D-glucose 6-phosphate = beta-D-fructose 6-phosphate. Its pathway is carbohydrate biosynthesis; gluconeogenesis. It functions in the pathway carbohydrate degradation; glycolysis; D-glyceraldehyde 3-phosphate and glycerone phosphate from D-glucose: step 2/4. Functionally, catalyzes the reversible isomerization of glucose-6-phosphate to fructose-6-phosphate. This is Glucose-6-phosphate isomerase from Vibrio cholerae serotype O1 (strain ATCC 39315 / El Tor Inaba N16961).